The primary structure comprises 197 residues: Ribonuclease HII (197 aa).

Positions 9 to 197 constitute an RNase H type-2 domain; that stretch reads ELIAGVDEVG…APVKKALEQF (189 aa). A divalent metal cation-binding residues include Asp-15, Glu-16, and Asp-107.

It belongs to the RNase HII family. Mn(2+) is required as a cofactor. Mg(2+) serves as cofactor.

It localises to the cytoplasm. It catalyses the reaction Endonucleolytic cleavage to 5'-phosphomonoester.. In terms of biological role, endonuclease that specifically degrades the RNA of RNA-DNA hybrids. In Haemophilus influenzae (strain PittGG), this protein is Ribonuclease HII.